Consider the following 121-residue polypeptide: Large ribosomal subunit protein uL22 (121 aa).

Belongs to the universal ribosomal protein uL22 family. In terms of assembly, part of the 50S ribosomal subunit.

Its function is as follows. This protein binds specifically to 23S rRNA; its binding is stimulated by other ribosomal proteins, e.g. L4, L17, and L20. It is important during the early stages of 50S assembly. It makes multiple contacts with different domains of the 23S rRNA in the assembled 50S subunit and ribosome. Functionally, the globular domain of the protein is located near the polypeptide exit tunnel on the outside of the subunit, while an extended beta-hairpin is found that lines the wall of the exit tunnel in the center of the 70S ribosome. This is Large ribosomal subunit protein uL22 from Salinibacter ruber (strain DSM 13855 / M31).